We begin with the raw amino-acid sequence, 199 residues long: 3-isopropylmalate dehydratase small subunit (199 aa).

Belongs to the LeuD family. LeuD type 1 subfamily. Heterodimer of LeuC and LeuD.

It carries out the reaction (2R,3S)-3-isopropylmalate = (2S)-2-isopropylmalate. It participates in amino-acid biosynthesis; L-leucine biosynthesis; L-leucine from 3-methyl-2-oxobutanoate: step 2/4. Its function is as follows. Catalyzes the isomerization between 2-isopropylmalate and 3-isopropylmalate, via the formation of 2-isopropylmaleate. The sequence is that of 3-isopropylmalate dehydratase small subunit from Mycobacteroides abscessus (strain ATCC 19977 / DSM 44196 / CCUG 20993 / CIP 104536 / JCM 13569 / NCTC 13031 / TMC 1543 / L948) (Mycobacterium abscessus).